Consider the following 204-residue polypeptide: Rho GDP-dissociation inhibitor 1 (204 aa).

Positions 1–36 (MAEQEPTAEQLAQIAAENEEDEHSVNYKPPAQKSIQ) are disordered. Ala-2 is modified (N-acetylalanine). Position 34 is a phosphoserine (Ser-34). At Lys-43 the chain carries N6-acetyllysine. At Ser-47 the chain carries Phosphoserine. N6-acetyllysine occurs at positions 105 and 127. Residues Lys-138 and Lys-141 each participate in a glycyl lysine isopeptide (Lys-Gly) (interchain with G-Cter in SUMO1); alternate cross-link. Residues Lys-138 and Lys-141 each participate in a glycyl lysine isopeptide (Lys-Gly) (interchain with G-Cter in SUMO2); alternate cross-link. An N6-acetyllysine; alternate modification is found at Lys-141. N6-succinyllysine; alternate is present on Lys-141. Lys-178 carries the post-translational modification N6-acetyllysine.

This sequence belongs to the Rho GDI family. In terms of assembly, monomer. Interacts with FER. Interacts with PLXNB3. Forms a heterodimer with RAC1. Interacts with RHOA, the affinity is increased by three orders of magnitude when RHOA is prenylated. Interacts with PSMD10; the interaction increases ARHGDIA association with RHOA, leading to ARHGDIA-mediated inactivation of RHOA and ROCK and prolonged AKT activation. Interacts with KANK2; the interaction is direct and may regulate the interaction of ARHGDIA with RHOA, RAC1 and CDC42. Interacts with RHOC. Interacts with CDC42. Interacts with NGFR (via death domain); NGFR binding decreases the affinity for RHOA.

It is found in the cytoplasm. In terms of biological role, controls Rho proteins homeostasis. Regulates the GDP/GTP exchange reaction of the Rho proteins by inhibiting the dissociation of GDP from them, and the subsequent binding of GTP to them. Retains Rho proteins such as CDC42, RAC1 and RHOA in an inactive cytosolic pool, regulating their stability and protecting them from degradation. Actively involved in the recycling and distribution of activated Rho GTPases in the cell, mediates extraction from membranes of both inactive and activated molecules due its exceptionally high affinity for prenylated forms. Through the modulation of Rho proteins, may play a role in cell motility regulation. In glioma cells, inhibits cell migration and invasion by mediating the signals of SEMA5A and PLXNB3 that lead to inactivation of RAC1. The sequence is that of Rho GDP-dissociation inhibitor 1 (ARHGDIA) from Homo sapiens (Human).